We begin with the raw amino-acid sequence, 336 residues long: Protein phosphatase 1 regulatory subunit pprA (336 aa).

The segment covering Met-1–Ser-10 has biased composition (low complexity). The disordered stretch occupies residues Met-1–Glu-24. Residues Glu-11–Ser-21 show a composition bias toward basic and acidic residues. LRR repeat units lie at residues Pro-26–Pro-47, Thr-49–Lys-70, Asn-71–Lys-92, Glu-93–Gln-114, Ser-115–Asp-136, Lys-139–Val-160, Pro-161–Val-182, Asn-183–Ser-204, His-205–Val-225, Cys-229–Lys-250, Gln-251–Pro-272, and Asp-273–Val-294. The LRRCT domain maps to Asn-306–Asn-336.

Belongs to the SDS22 family.

Its subcellular location is the nucleus. Functionally, regulatory subunit of protein phosphatase 1. This Dictyostelium discoideum (Social amoeba) protein is Protein phosphatase 1 regulatory subunit pprA (pprA).